We begin with the raw amino-acid sequence, 245 residues long: 1-(5-phosphoribosyl)-5-[(5-phosphoribosylamino)methylideneamino] imidazole-4-carboxamide isomerase (245 aa).

Asp-7 acts as the Proton acceptor in catalysis. Asp-129 acts as the Proton donor in catalysis.

This sequence belongs to the HisA/HisF family.

It localises to the cytoplasm. It catalyses the reaction 1-(5-phospho-beta-D-ribosyl)-5-[(5-phospho-beta-D-ribosylamino)methylideneamino]imidazole-4-carboxamide = 5-[(5-phospho-1-deoxy-D-ribulos-1-ylimino)methylamino]-1-(5-phospho-beta-D-ribosyl)imidazole-4-carboxamide. Its pathway is amino-acid biosynthesis; L-histidine biosynthesis; L-histidine from 5-phospho-alpha-D-ribose 1-diphosphate: step 4/9. This chain is 1-(5-phosphoribosyl)-5-[(5-phosphoribosylamino)methylideneamino] imidazole-4-carboxamide isomerase, found in Salmonella agona (strain SL483).